We begin with the raw amino-acid sequence, 624 residues long: Ferredoxin-fold anticodon-binding domain-containing protein 1 (624 aa).

In terms of domain architecture, FDX-ACB spans 531 to 624 (LYPPCYVHDV…IQQHLYVIPR (94 aa)).

The sequence is that of Ferredoxin-fold anticodon-binding domain-containing protein 1 (FDXACB1) from Homo sapiens (Human).